Reading from the N-terminus, the 697-residue chain is SITS-binding protein (697 aa).

Residues 1 to 20 are disordered; the sequence is MARRAKKMASNSGDSSPEPG. Residues 2 to 29 lie on the Cytoplasmic side of the membrane; it reads ARRAKKMASNSGDSSPEPGIKEINETWK. The chain crosses the membrane as a helical span at residues 30–50; sequence GAIACLGVALLFLMTIGVLYW. N-linked (GlcNAc...) asparagine glycans are attached at residues Asn-112, Asn-134, Asn-162, Asn-386, Asn-405, and Asn-470. Helical transmembrane passes span 503 to 521 and 542 to 562; these read GLIP…FFIP and WMQI…WVFG. N-linked (GlcNAc...) asparagine glycosylation is present at Asn-568.

This sequence belongs to the glycosyl hydrolase 31 family. In terms of assembly, homodimer; disulfide-linked. In terms of tissue distribution, electroplax tissue, brain (200-fold less), and heart (500-fold less).

The protein localises to the membrane. Its function is as follows. This glycoprotein is probably not a functional part of the chloride channel. The polypeptide is SITS-binding protein (Tetronarce californica (Pacific electric ray)).